The following is a 494-amino-acid chain: MFHVQKELGSHEAVIVALFEEEKTSSFVKELDKAFEGQLQVLLEEKELSTKKKAISKVHSLGKTNVKRYYFVGLGKKESYTTEILRAALGKAFKTLQAAKVQDAAILLDSFVTEKLDAIDVAHIAAEVQGLGTYELQTYKSDKKDRVELEKFTAITAEDTQEIEAALTVGYVHGRATNSARTLVNMPPNVLTATKLAEYAVELAEKYDMDYKVLEKEEMEELGMGALLAVNQGSVEPPKMIALIYKGKEEWTDVIGFVGKGITYDTGGYSLKPREGMVGMKGDMGGAAAVLGAMEIIGELRPEQNVIAVIPSTDNVVSGTAFKPDDVITSMSGKTIEVLNTDAEGRLALADGITYAKKLGANYLIDVATLTGGVIVALGNHTTGAMTNNEELFEQVLEASMETDESIWQLPIFDRDKERVRNSKFADLNNSPGREGHAVMAGTFLGEFAEDTPWVHLDIAGTSESSGAHDLGPAGATGAMVRTLATLVERFGEE.

Mn(2+) contacts are provided by K260 and D265. K272 is an active-site residue. Mn(2+)-binding residues include D283, D342, and E344. R346 is a catalytic residue.

The protein belongs to the peptidase M17 family. Mn(2+) is required as a cofactor.

Its subcellular location is the cytoplasm. The enzyme catalyses Release of an N-terminal amino acid, Xaa-|-Yaa-, in which Xaa is preferably Leu, but may be other amino acids including Pro although not Arg or Lys, and Yaa may be Pro. Amino acid amides and methyl esters are also readily hydrolyzed, but rates on arylamides are exceedingly low.. It carries out the reaction Release of an N-terminal amino acid, preferentially leucine, but not glutamic or aspartic acids.. Its function is as follows. Presumably involved in the processing and regular turnover of intracellular proteins. Catalyzes the removal of unsubstituted N-terminal amino acids from various peptides. In Bacillus cereus (strain ATCC 10987 / NRS 248), this protein is Probable cytosol aminopeptidase.